Consider the following 586-residue polypeptide: FAD-linked oxidoreductase orf1 (586 aa).

Positions 1–17 (MKSFATTVLLVTPGIYA) are cleaved as a signal peptide. 12 N-linked (GlcNAc...) asparagine glycosylation sites follow: Asn-29, Asn-51, Asn-79, Asn-110, Asn-146, Asn-188, Asn-314, Asn-321, Asn-358, Asn-402, Asn-434, and Asn-461. In terms of domain architecture, FAD-binding PCMH-type spans 124–303 (TLGNYVSYAI…LSMTAKVHPD (180 aa)).

Belongs to the oxygen-dependent FAD-linked oxidoreductase family.

The enzyme catalyses betaenone C = betaenone A. It functions in the pathway mycotoxin biosynthesis. FAD-linked oxidoreductase; part of the gene cluster that mediates the biosynthesis of betaenones, phytotoxic polyketides involved in leaf spot disease in sugar beets. The first step of the pathway is the synthesis of dehydroprobetaenone I by the polyketide synthase bet1 and the enoyl reductase bet3 via condensation of one acetyl-CoA starter unit with 7 malonyl-CoA units and 5 methylations. The C-terminal reductase (R) domain of bet1 catalyzes the reductive release of the polyketide chain. Because bet1 lacks a designated enoylreductase (ER) domain, the required activity is provided the enoyl reductase bet3. The short-chain dehydrogenase/reductase bet4 then catalyzes reduction of dehydroprobetaenone I to probetaenone I. The cytochrome P450 monooxygenase bet2 catalyzes successive epoxidation, oxidation (resulting from epoxide opening) and hydroxylation to install a tertiary alcohol in the decaline ring to yield betaenone C from dehydroprobetaenone I and betaenone B from probetaenone I. The FAD-linked oxidoreductase (orf1) is probably responsible for the conversion of betaenone C to betaenone A via an intramolecular aldol reaction between C-1 and C-17 to form the bridged tricyclic system in betaenone A. The sequence is that of FAD-linked oxidoreductase orf1 from Neocamarosporium betae (Beet black rot fungus).